Reading from the N-terminus, the 359-residue chain is 4-hydroxy-3-methylbut-2-en-1-yl diphosphate synthase (flavodoxin) (359 aa).

[4Fe-4S] cluster-binding residues include Cys264, Cys267, Cys299, and Glu306.

The protein belongs to the IspG family. [4Fe-4S] cluster serves as cofactor.

The enzyme catalyses (2E)-4-hydroxy-3-methylbut-2-enyl diphosphate + oxidized [flavodoxin] + H2O + 2 H(+) = 2-C-methyl-D-erythritol 2,4-cyclic diphosphate + reduced [flavodoxin]. It functions in the pathway isoprenoid biosynthesis; isopentenyl diphosphate biosynthesis via DXP pathway; isopentenyl diphosphate from 1-deoxy-D-xylulose 5-phosphate: step 5/6. Its function is as follows. Converts 2C-methyl-D-erythritol 2,4-cyclodiphosphate (ME-2,4cPP) into 1-hydroxy-2-methyl-2-(E)-butenyl 4-diphosphate. The sequence is that of 4-hydroxy-3-methylbut-2-en-1-yl diphosphate synthase (flavodoxin) from Helicobacter pylori (strain Shi470).